The sequence spans 111 residues: Putative protein p34 (111 aa).

This Acyrthosiphon pisum secondary endosymbiont phage 1 (Bacteriophage APSE-1) protein is Putative protein p34 (34).